The sequence spans 263 residues: Endonuclease 8 (263 aa).

Proline 2 (schiff-base intermediate with DNA) is an active-site residue. Glutamate 3 functions as the Proton donor in the catalytic mechanism. Lysine 53 (proton donor; for beta-elimination activity) is an active-site residue. Positions 70, 125, and 169 each coordinate DNA. The FPG-type zinc-finger motif lies at 229–263 (KVFHRDGEPCERCGSIIEKTTLSSRPFYWCPGCQH). Arginine 253 functions as the Proton donor; for delta-elimination activity in the catalytic mechanism.

The protein belongs to the FPG family. Requires Zn(2+) as cofactor.

It catalyses the reaction 2'-deoxyribonucleotide-(2'-deoxyribose 5'-phosphate)-2'-deoxyribonucleotide-DNA = a 3'-end 2'-deoxyribonucleotide-(2,3-dehydro-2,3-deoxyribose 5'-phosphate)-DNA + a 5'-end 5'-phospho-2'-deoxyribonucleoside-DNA + H(+). Functionally, involved in base excision repair of DNA damaged by oxidation or by mutagenic agents. Acts as a DNA glycosylase that recognizes and removes damaged bases. Has a preference for oxidized pyrimidines, such as thymine glycol, 5,6-dihydrouracil and 5,6-dihydrothymine. Has AP (apurinic/apyrimidinic) lyase activity and introduces nicks in the DNA strand. Cleaves the DNA backbone by beta-delta elimination to generate a single-strand break at the site of the removed base with both 3'- and 5'-phosphates. This chain is Endonuclease 8, found in Escherichia coli (strain K12 / MC4100 / BW2952).